We begin with the raw amino-acid sequence, 432 residues long: Homogentisate 1,2-dioxygenase (432 aa).

Histidine 286 (proton acceptor) is an active-site residue. Positions 329 and 335 each coordinate Fe cation. Tyrosine 344 and histidine 365 together coordinate homogentisate. Histidine 365 is a Fe cation binding site.

It belongs to the homogentisate dioxygenase family. Hexamer; dimer of trimers. Requires Fe cation as cofactor.

It carries out the reaction homogentisate + O2 = 4-maleylacetoacetate + H(+). Its pathway is amino-acid degradation; L-phenylalanine degradation; acetoacetate and fumarate from L-phenylalanine: step 4/6. Its function is as follows. Involved in the catabolism of homogentisate (2,5-dihydroxyphenylacetate or 2,5-OH-PhAc), a central intermediate in the degradation of phenylalanine and tyrosine. Catalyzes the oxidative ring cleavage of the aromatic ring of homogentisate to yield maleylacetoacetate. The polypeptide is Homogentisate 1,2-dioxygenase (Bordetella bronchiseptica (strain ATCC BAA-588 / NCTC 13252 / RB50) (Alcaligenes bronchisepticus)).